The sequence spans 56 residues: Large ribosomal subunit protein bL32 (56 aa).

The span at 1–16 (MAVQKSKKSRSMRGMR) shows a compositional bias: basic residues. The tract at residues 1 to 33 (MAVQKSKKSRSMRGMRRSHDALTTSAVSVDATS) is disordered. Over residues 21-33 (ALTTSAVSVDATS) the composition is skewed to polar residues.

Belongs to the bacterial ribosomal protein bL32 family.

In Aliivibrio fischeri (strain ATCC 700601 / ES114) (Vibrio fischeri), this protein is Large ribosomal subunit protein bL32.